We begin with the raw amino-acid sequence, 208 residues long: MTKGILGKKVGMTQIFTEAGELIPVTVIEATPNVVLQVKTVETDGYNAIQVGFDDKREVLSNKPAKGHVAKANTAPKRFIREFKNVEGLEVGAEITVETFAAGDVVDVTGTSKGKGFQGVIKRHGQSRGPMAHGSRYHRRPGSMGPVAPNRVFKGKNLAGRMGGDRVTIQNLEVVQVVPEKNVILIKGNVPGAKKSLITIKSAVKAGK.

Positions 116–148 (GFQGVIKRHGQSRGPMAHGSRYHRRPGSMGPVA) are disordered.

Belongs to the universal ribosomal protein uL3 family. Part of the 50S ribosomal subunit. Forms a cluster with proteins L14 and L19.

In terms of biological role, one of the primary rRNA binding proteins, it binds directly near the 3'-end of the 23S rRNA, where it nucleates assembly of the 50S subunit. The sequence is that of Large ribosomal subunit protein uL3 from Streptococcus pneumoniae (strain Hungary19A-6).